Reading from the N-terminus, the 454-residue chain is DNA-binding protein (454 aa).

Residues 1 to 41 (MSHKKVVAISESSSDEEVPVAPPTAPPKKRQRKAVEEPRGH) are disordered. Tyr129 bears the Phosphotyrosine; by host mark. Residues Cys213 and His215 each contribute to the Zn(2+) site. Residues 226 to 260 (VEMDVNSENAQRALKENPEKTKIVSNRWGRNVVQF) are flexible loop. Zn(2+)-binding residues include Cys268, Cys284, Cys325, Cys327, Cys378, and Cys394. Residues 440 to 454 (TILPQGQHDDDLVLF) form a C-terminal arm, DBP binding region.

Belongs to the adenoviridae E2A DNA-binding protein family. Homomultimerizes on viral ssDNA bound to pTP. Forms a initiation complex with viral polymerase, pTP and hosts NFIA and POU2F1/OCT1. Interacts with host SRCAP.

It is found in the host nucleus. Functionally, plays a role in the elongation phase of viral strand displacement replication by unwinding the template in an ATP-independent fashion, employing its capacity to form multimers. Also enhances the rate of initiation. Released from template upon second strand synthesis. Assembles in complex with viral pTP, viral pol, host NFIA and host POU2F1/OCT1 on viral origin of replication. Covers the whole ssDNA genome during synthesis. The complementary strand synthesis induces its relese from DNA template. May inhibit cellular transcription mediated by the interaction between host SRCAP and CBP. This chain is DNA-binding protein, found in Canine adenovirus serotype 1 (strain RI261) (CAdV-1).